We begin with the raw amino-acid sequence, 398 residues long: Ribosomal RNA small subunit methyltransferase B (398 aa).

Residues 221 to 227 (CGGAGLK), Asp-242, Asp-268, and Asp-283 contribute to the S-adenosyl-L-methionine site. Cys-336 serves as the catalytic Nucleophile.

Belongs to the class I-like SAM-binding methyltransferase superfamily. RsmB/NOP family.

The protein localises to the cytoplasm. It catalyses the reaction cytidine(967) in 16S rRNA + S-adenosyl-L-methionine = 5-methylcytidine(967) in 16S rRNA + S-adenosyl-L-homocysteine + H(+). Functionally, specifically methylates the cytosine at position 967 (m5C967) of 16S rRNA. This Thermus thermophilus (strain ATCC 27634 / DSM 579 / HB8) protein is Ribosomal RNA small subunit methyltransferase B.